Reading from the N-terminus, the 133-residue chain is UPF0102 protein Fnod_1509 (133 aa).

Belongs to the UPF0102 family.

This chain is UPF0102 protein Fnod_1509, found in Fervidobacterium nodosum (strain ATCC 35602 / DSM 5306 / Rt17-B1).